A 244-amino-acid chain; its full sequence is Dehydration-responsive element-binding protein 2E (244 aa).

The interval 1 to 25 (MEKEDNGSKQSSSASVVSSRRRRRV) is disordered. Residues 20-46 (RRRRRVVEPVEATLQRWEEEGLARARR) carry the Nuclear localization signal motif. The segment at residues 69–134 (RFRGVRQRVW…YGPYARLNFP (66 aa)) is a DNA-binding region (AP2/ERF).

It belongs to the AP2/ERF transcription factor family. ERF subfamily. As to expression, expressed in xylem tissues, stigma, anthers and region where sepals and petals attach the peduncle.

It localises to the nucleus. In terms of biological role, transcriptional activator that binds specifically to the DNA sequence 5'-[AG]CCGAC-3'. Binding to the C-repeat/DRE element mediates abscisic acid-inducible transcription. Involved in the regulation of plant development and tolerance to abiotic stresses. This is Dehydration-responsive element-binding protein 2E (DREB2E) from Arabidopsis thaliana (Mouse-ear cress).